The chain runs to 189 residues: Interferon alpha-D (189 aa).

Positions 1-23 are cleaved as a signal peptide; that stretch reads MAPAWSLLLALLLLSCNAICSLG. Cystine bridges form between Cys24–Cys122 and Cys52–Cys162.

Belongs to the alpha/beta interferon family.

It is found in the secreted. Its function is as follows. Produced by macrophages, IFN-alpha have antiviral activities. Interferon stimulates the production of two enzymes: a protein kinase and an oligoadenylate synthetase. This is Interferon alpha-D (IFNAD) from Bos taurus (Bovine).